A 434-amino-acid polypeptide reads, in one-letter code: Probable glucuronosyltransferase Os02g0520750 (434 aa).

The Cytoplasmic portion of the chain corresponds to 1–10 (MVGARAGRVP). A helical; Signal-anchor for type II membrane protein membrane pass occupies residues 11–31 (AAAAAAAAVLIVAACVFSSLA). Residues 32-434 (GAAAAAEVVG…GPVADLKPWK (403 aa)) are Lumenal-facing. Asn160 and Asn421 each carry an N-linked (GlcNAc...) asparagine glycan.

This sequence belongs to the glycosyltransferase 47 family.

It localises to the golgi apparatus membrane. Functionally, involved in the synthesis of glucuronoxylan hemicellulose in secondary cell walls. This chain is Probable glucuronosyltransferase Os02g0520750, found in Oryza sativa subsp. japonica (Rice).